A 235-amino-acid polypeptide reads, in one-letter code: MNAAIEHVQAVAFDLDGTLCDSVPDLAAAAEAMLEQLGMKPLPAKVVESYVGDGIGKLVHRVLTNDRDREADSELWEKGFVSYMKYYRDHLSVFTRPYPETEAGLALLKSLGIPLAVITNKNEILAAELLKQLGLADYFSLILGGDSLPEKKPSPLPLRHAAEVLGIDVANMVMVGDSRNDIIAAKAAGCLSVGVTFGYGDMTLLSQDDATRPDWIIGSLPEIYENLQPQKNKEE.

The Nucleophile role is filled by Asp14. Mg(2+) is bound by residues Asp14, Asp16, and Asp177.

This sequence belongs to the HAD-like hydrolase superfamily. CbbY/CbbZ/Gph/YieH family. The cofactor is Mg(2+).

The catalysed reaction is 2-phosphoglycolate + H2O = glycolate + phosphate. The protein operates within organic acid metabolism; glycolate biosynthesis; glycolate from 2-phosphoglycolate: step 1/1. Its function is as follows. Specifically catalyzes the dephosphorylation of 2-phosphoglycolate. Is involved in the dissimilation of the intracellular 2-phosphoglycolate formed during the DNA repair of 3'-phosphoglycolate ends, a major class of DNA lesions induced by oxidative stress. The polypeptide is Phosphoglycolate phosphatase (Neisseria meningitidis serogroup A / serotype 4A (strain DSM 15465 / Z2491)).